The chain runs to 797 residues: Mitochondrial inner membrane m-AAA protease component AFG3L2 (797 aa).

The N-terminal 38 residues, 1 to 38 (MAHRCLRLWGRGGCWPRGLQQLLVPGGVGPGEQPCLRT), are a transit peptide targeting the mitochondrion. Residues 39–66 (LYRFVTTQARASRNSLLTDIIAAYQRFC) constitute a propeptide, removed in mature form. The Mitochondrial matrix portion of the chain corresponds to 39–142 (LYRFVTTQAR…KGDIPWDDKD (104 aa)). Residues 76 to 126 (YFPNGKNGKKASEPKEVMGEKKESKPAATTRSSGGGGGGGGKRGGKKDDSH) form a disordered region. Positions 85 to 100 (KASEPKEVMGEKKESK) are enriched in basic and acidic residues. The segment covering 108–117 (SGGGGGGGGK) has biased composition (gly residues). The residue at position 117 (K117) is an N6-succinyllysine. Residues 143 to 163 (FRMFFLWTALFWGGVMFYLLL) traverse the membrane as a helical segment. The Mitochondrial intermembrane segment spans residues 164 to 250 (KRSGREITWK…VPVVYIAESD (87 aa)). Residues 251 to 271 (GSFLLSMLPTVLIIAFLLYTI) form a helical membrane-spanning segment. Over 272–797 (RRGPAGIGRT…EEPPGEKVAN (526 aa)) the chain is Mitochondrial matrix. ATP-binding residues include V310, A311, T352, G353, K354, T355, L356, and H490. H574 contacts Zn(2+). The active site involves E575. Zn(2+) contacts are provided by H578 and D649. Residues 759–797 (FVEGTGSLDEDTSLPEGLKDWNKEREKEKEEPPGEKVAN) form a disordered region. Over residues 775-797 (GLKDWNKEREKEKEEPPGEKVAN) the composition is skewed to basic and acidic residues.

The protein in the N-terminal section; belongs to the AAA ATPase family. It in the C-terminal section; belongs to the peptidase M41 family. In terms of assembly, homohexamer. Forms heterohexamers with SPG7. The m-AAA protease is either composed of homohexamers of AFG3L2 or heterohexamers of AFG3L2 and SPG7. Interacts with MAIP1. Interacts with DNAJC19. Interacts with PHB2. Zn(2+) is required as a cofactor. In terms of processing, upon import into the mitochondrion, the N-terminal transit peptide is cleaved to generate an intermediate form which undergoes autocatalytic proteolytic processing to generate the proteolytically active mature form. Ubiquitous. Highly expressed in the cerebellar Purkinje cells.

The protein resides in the mitochondrion inner membrane. The catalysed reaction is ATP + H2O = ADP + phosphate + H(+). In terms of biological role, catalytic component of the m-AAA protease, a protease that plays a key role in proteostasis of inner mitochondrial membrane proteins, and which is essential for axonal and neuron development. AFG3L2 possesses both ATPase and protease activities: the ATPase activity is required to unfold substrates, threading them into the internal proteolytic cavity for hydrolysis into small peptide fragments. The m-AAA protease carries out quality control in the inner membrane of the mitochondria by mediating degradation of mistranslated or misfolded polypeptides. The m-AAA protease complex also promotes the processing and maturation of mitochondrial proteins, such as MRPL32/bL32m, PINK1 and SP7. Mediates protein maturation of the mitochondrial ribosomal subunit MRPL32/bL32m by catalyzing the cleavage of the presequence of MRPL32/bL32m prior to assembly into the mitochondrial ribosome. Required for SPG7 maturation into its active mature form after SPG7 cleavage by mitochondrial-processing peptidase (MPP). Required for the maturation of PINK1 into its 52kDa mature form after its cleavage by mitochondrial-processing peptidase (MPP). Acts as a regulator of calcium in neurons by mediating degradation of SMDT1/EMRE before its assembly with the uniporter complex, limiting the availability of SMDT1/EMRE for MCU assembly and promoting efficient assembly of gatekeeper subunits with MCU. Promotes the proteolytic degradation of GHITM upon hyperpolarization of mitochondria: progressive GHITM degradation leads to respiratory complex I degradation and broad reshaping of the mitochondrial proteome by AFG3L2. Also acts as a regulator of mitochondrial glutathione homeostasis by mediating cleavage and degradation of SLC25A39. SLC25A39 cleavage is prevented when SLC25A39 binds iron-sulfur. Involved in the regulation of OMA1-dependent processing of OPA1. May act by mediating processing of OMA1 precursor, participating in OMA1 maturation. The sequence is that of Mitochondrial inner membrane m-AAA protease component AFG3L2 from Homo sapiens (Human).